A 70-amino-acid chain; its full sequence is Ranatuerin-2SN1 (70 aa).

The first 22 residues, 1–22 (MFTLKKSLLLIFFLGTISLSLC), serve as a signal peptide directing secretion. A propeptide spans 23-40 (EKERDADDDEVEVIKQEE) (removed in mature form). The cysteines at positions 65 and 70 are disulfide-linked.

This sequence belongs to the frog skin active peptide (FSAP) family. Ranatuerin subfamily. In terms of tissue distribution, expressed by the skin glands.

Its subcellular location is the secreted. In terms of biological role, antimicrobial peptide. Weakly active against P.faecalis X29. Not active against fungi. Shows very weak hemolytic activity against human erythrocytes. This is Ranatuerin-2SN1 from Sylvirana spinulosa (Fine-spined frog).